The following is a 560-amino-acid chain: Glucose-6-phosphate isomerase, cytosolic (560 aa).

Alanine 2 carries the N-acetylalanine modification. Glutamate 361 (proton donor) is an active-site residue. Catalysis depends on residues histidine 392 and lysine 517.

It belongs to the GPI family. As to quaternary structure, homodimer.

It localises to the cytoplasm. The enzyme catalyses alpha-D-glucose 6-phosphate = beta-D-fructose 6-phosphate. It functions in the pathway carbohydrate degradation; glycolysis; D-glyceraldehyde 3-phosphate and glycerone phosphate from D-glucose: step 2/4. Inhibited by glycerol-3-P (G3P). The sequence is that of Glucose-6-phosphate isomerase, cytosolic (PGIC) from Arabidopsis thaliana (Mouse-ear cress).